Consider the following 846-residue polypeptide: Choline trimethylamine-lyase (846 aa).

A PFL domain is found at 60 to 718; the sequence is PRHVKLKENF…LLGASANGRR (659 aa). The Cysteine radical intermediate role is filled by C489. The active-site Proton acceptor is the E491. Positions 725-846 constitute a Glycine radical domain; sequence DGISPTQGAD…IISRTMLHGF (122 aa). G821 bears the Glycine radical mark.

It belongs to the glycyl radical enzyme (GRE) family. CutC subfamily. As to quaternary structure, homodimer. Requires the activating protein CutD to generate the key active site glycyl radical on Gly-821 that is involved in catalysis.

The enzyme catalyses choline = trimethylamine + acetaldehyde. It participates in amine and polyamine metabolism; choline degradation. In terms of biological role, glycine radical enzyme that catalyzes the cleavage of a C-N bond in choline, producing trimethylamine (TMA) and acetaldehyde. Is involved in the anaerobic choline utilization pathway that allows D.alaskensis to grow on choline as a source of carbon and energy. Is strictly specific for choline as substrate. In Oleidesulfovibrio alaskensis (strain ATCC BAA-1058 / DSM 17464 / G20) (Desulfovibrio alaskensis), this protein is Choline trimethylamine-lyase.